We begin with the raw amino-acid sequence, 185 residues long: Ribosome-recycling factor (185 aa).

The protein belongs to the RRF family.

It is found in the cytoplasm. Its function is as follows. Responsible for the release of ribosomes from messenger RNA at the termination of protein biosynthesis. May increase the efficiency of translation by recycling ribosomes from one round of translation to another. This is Ribosome-recycling factor from Geobacillus kaustophilus (strain HTA426).